The sequence spans 1514 residues: MAVEGSTITSRIKNLLRSPSIKLRRSKAGNRREDLSSKVTLEKVLGITVSGGRGLACDPRSGLVAYPAGCVVVLFNPRKHKQHHILNSSRKTITALAFSPDGKYLVTGESGHMPAVRVWDVAEHSQVAELQEHKYGVACVAFSPSAKYIVSVGYQHDMIVNVWAWKKNIVVASNKVSSRVTAVSFSEDCSYFVTAGNRHIKFWYLDDSKTSKVNATVPLLGRSGLLGELRNNLFTDVACGRGKKADSTFCITSSGLLCEFSDRRLLDKWVELRNIDSFTTTVAHCISVSQDYIFCGCADGTVRLFNPSNLHFLSTLPRPHALGTDIASVTEASRLFSGVANARYPDTIALTFDPTNQWLSCVYNDHSIYVWDVRDPKKVGKVYSALYHSSCVWSVEVYPEVKDSNQACLPPSSFITCSSDNTIRLWNTESSGVHGSTLHRNILSSDLIKIIYVDGNTQALLDTELPGGDKADASLLDPRVGIRSVCVSPNGQHLASGDRMGTLRVHELQSLSEMLKVEAHDSEILCLEYSKPDTGLKLLASASRDRLIHVLDAGREYSLQQTLDEHSSSITAVKFAASDGQVRMISCGADKSIYFRTAQKSGDGVQFTRTHHVVRKTTLYDMDVEPSWKYTAIGCQDRNIRIFNISSGKQKKLFKGSQGEDGTLIKVQTDPSGIYIATSCSDKNLSIFDFSSGECVATMFGHSEIVTGMKFSNDCKHLISVSGDSCIFVWRLSSEMTISMRQRLAELRQRQRGGKQQGPSSPQRASGPNRHQAPSMLSPGPALSSDSDKEGEDEGTEEELPALPVLAKSTKKALASVPSPALPRSLSHWEMSRAQESVGFLDPAPAANPGPRRRGRWVQPGVELSVRSMLDLRQLETLAPSLQDPSQDSLAIIPSGPRKHGQEALETSLTSQNEKPPRPQASQPCSYPHIIRLLSQEEGVFAQDLEPAPIEDGIVYPEPSDNPTMDTSEFQVQAPARGTLGRVYPGSRSSEKHSPDSACSVDYSSSCLSSPEHPTEDSESTEPLSVDGISSDLEEPAEGDEEEEEEEGGMGPYGLQEGSPQTPDQEQFLKQHFETLASGAAPGAPVQVPERSESRSISSRFLLQVQTRPLREPSPSSSSLALMSRPAQVPQASGEQPRGNGANPPGAPPEVEPSSGNPSPQQAASVLLPRCRLNPDSSWAPKRVATASPFSGLQKAQSVHSLVPQERHEASLQAPSPGALLSREIEAQDGLGSLPPADGRPSRPHSYQNPTTSSMAKISRSISVGENLGLVAEPQAHAPIRVSPLSKLALPSRAHLVLDIPKPLPDRPTLAAFSPVTKGRAPGEAEKPGFPVGLGKAHSTTERWACLGEGTTPKPRTECQAHPGPSSPCAQQLPVSSLFQGPENLQPPPPEKTPNPMECTKPGAALSQDSEPAVSLEQCEQLVAELRGSVRQAVRLYHSVAGCKMPSAEQSRIAQLLRDTFSSVRQELEAVAGAVLSSPGSSPGAVGAEQTQALLEQYSELLLRAVERRMERKL.

The residue at position 2 (alanine 2) is an N-acetylalanine. 12 WD repeats span residues 88 to 129 (SSRK…QVAE), 132 to 173 (EHKY…VVAS), 175 to 213 (KVSSRVTAVSFSEDCSYFVTAGNRHIKFWYLDDSKTSKV), 276 to 315 (DSFTTTVAHCISVSQDYIFCGCADGTVRLFNPSNLHFLST), 342 to 381 (ARYPDTIALTFDPTNQWLSCVYNDHSIYVWDVRDPKKVGK), 387 to 436 (YHSS…VHGS), 477 to 516 (DPRVGIRSVCVSPNGQHLASGDRMGTLRVHELQSLSEMLK), 519 to 561 (AHDS…SLQQ), 565 to 606 (EHSS…DGVQ), 614 to 653 (VRKTTLYDMDVEPSWKYTAIGCQDRNIRIFNISSGKQKKL), 659 to 698 (GEDGTLIKVQTDPSGIYIATSCSDKNLSIFDFSSGECVAT), and 701 to 740 (GHSEIVTGMKFSNDCKHLISVSGDSCIFVWRLSSEMTISM). 4 disordered regions span residues 748 to 804 (RQRQ…PALP), 880 to 925 (PSLQ…SQPC), 951 to 1256 (EDGI…SSMA), and 1299 to 1336 (DIPKPLPDRPTLAAFSPVTKGRAPGEAEKPGFPVGLGK). Acidic residues predominate over residues 789–800 (KEGEDEGTEEEL). Composition is skewed to polar residues over residues 905 to 925 (LETSLTSQNEKPPRPQASQPC) and 961 to 971 (DNPTMDTSEFQ). The span at 996-1011 (DSACSVDYSSSCLSSP) shows a compositional bias: low complexity. The segment covering 1032 to 1048 (DLEEPAEGDEEEEEEEG) has biased composition (acidic residues). Residues 1113-1126 (PSPSSSSLALMSRP) are compositionally biased toward low complexity. Composition is skewed to polar residues over residues 1188–1200 (SPFSGLQKAQSVH) and 1245–1256 (HSYQNPTTSSMA). Serine 1198 carries the post-translational modification Phosphoserine.

In terms of assembly, can form homodimers (via C-terminus). Interacts (via C-terminus) with WDR62 (via C-terminus). Interacts with MAPK9. Interacts (via N-terminus) with NOD2; the interaction is enhanced in presence of muramyl dipeptide (MDP). Interacts with MAPK10. In terms of tissue distribution, expressed in intestinal mucosa, where it is detected in epithelial cells, endothelial cells, smooth muscle cells and immune cells, such as lymphocytes. Expressed in kidney.

The protein localises to the cytoplasm. Its subcellular location is the nucleus. The protein resides in the cytoskeleton. It localises to the spindle pole. Its function is as follows. Negative regulator of NOD2 function. It down-regulates NOD2-induced processes such as activation of NF-kappa-B signaling, IL8 secretion and antibacterial response. Involved in JNK signaling pathway. In Homo sapiens (Human), this protein is Mitogen-activated protein kinase-binding protein 1 (MAPKBP1).